Reading from the N-terminus, the 557-residue chain is Suprabasin (557 aa).

Residues 1 to 23 (MHLASLLSSCSLLLLLGALPGWA) form the signal peptide. 4 disordered regions span residues 150 to 175 (RFGQ…GAHH), 422 to 441 (GQGA…KVAQ), 464 to 490 (AAGQ…GKQE), and 509 to 533 (NQLL…TTLT). Residues 153-175 (QGAHHATGQAGKEAEKFGQGAHH) are compositionally biased toward low complexity. Over residues 476–487 (GQGVHHAAGQAG) the composition is skewed to low complexity.

It is found in the secreted. This is Suprabasin (SBSN) from Bos taurus (Bovine).